The following is a 195-amino-acid chain: Probable GTP-binding protein EngB (195 aa).

The region spanning 24-195 (GLSEVALSGR…QIWDLIANYL (172 aa)) is the EngB-type G domain. GTP contacts are provided by residues 32–39 (GRSNVGKS), 59–63 (GKTQT), 77–80 (DVPG), 144–147 (TKED), and 176–178 (YSS). Mg(2+) contacts are provided by Ser39 and Thr61.

Belongs to the TRAFAC class TrmE-Era-EngA-EngB-Septin-like GTPase superfamily. EngB GTPase family. The cofactor is Mg(2+).

In terms of biological role, necessary for normal cell division and for the maintenance of normal septation. This chain is Probable GTP-binding protein EngB, found in Staphylococcus haemolyticus (strain JCSC1435).